A 172-amino-acid chain; its full sequence is UPF0316 protein Clos_0555 (172 aa).

3 helical membrane-spanning segments follow: residues 3-23 (ALLGYLLIFVARLTDVSMATI), 34-54 (VIAACIGFVEVSIYVVAIGKV), and 61-81 (PLNVLAYASGFATGNYVGIFL).

Belongs to the UPF0316 family.

It localises to the cell membrane. In Alkaliphilus oremlandii (strain OhILAs) (Clostridium oremlandii (strain OhILAs)), this protein is UPF0316 protein Clos_0555.